A 622-amino-acid chain; its full sequence is DNA mismatch repair protein MutL (622 aa).

Belongs to the DNA mismatch repair MutL/HexB family.

In terms of biological role, this protein is involved in the repair of mismatches in DNA. It is required for dam-dependent methyl-directed DNA mismatch repair. May act as a 'molecular matchmaker', a protein that promotes the formation of a stable complex between two or more DNA-binding proteins in an ATP-dependent manner without itself being part of a final effector complex. The chain is DNA mismatch repair protein MutL from Prosthecochloris aestuarii (strain DSM 271 / SK 413).